The primary structure comprises 249 residues: Salivary antigen-5 (249 aa).

The signal sequence occupies residues 1 to 26 (MAKTQCPLVFSLLALALIGTLQSSAA). The SCP domain occupies 50–193 (SIHNYYRNLT…WYAGYLVCNY (144 aa)). Asn-57, Asn-127, and Asn-168 each carry an N-linked (GlcNAc...) asparagine glycan.

Belongs to the CRISP family. Venom allergen 5-like subfamily. In terms of assembly, monomeric in solution. The cofactor is Cu(2+). Saliva (at protein level). Salivary gland (at protein level).

The protein resides in the secreted. In terms of biological role, antioxidant protein that scavenges superoxide radicals. Removes superoxide radicals produced by PMA-stimulated host neutrophils. Inhibits host platelet aggregation induced by low doses of collagen by interfering with the pro-aggregatory properties of reactive oxygen species on platelets. Binds to heparin and sulfated glycosaminoglycans. This is Salivary antigen-5 from Dipetalogaster maximus (Blood-sucking bug).